The primary structure comprises 176 residues: Large ribosomal subunit protein uL6 (176 aa).

It belongs to the universal ribosomal protein uL6 family. As to quaternary structure, part of the 50S ribosomal subunit.

In terms of biological role, this protein binds to the 23S rRNA, and is important in its secondary structure. It is located near the subunit interface in the base of the L7/L12 stalk, and near the tRNA binding site of the peptidyltransferase center. This is Large ribosomal subunit protein uL6 from Lactobacillus acidophilus (strain ATCC 700396 / NCK56 / N2 / NCFM).